The chain runs to 463 residues: ATP synthase subunit beta (463 aa).

Residue 151–158 (GGAGVGKT) coordinates ATP.

The protein belongs to the ATPase alpha/beta chains family. In terms of assembly, F-type ATPases have 2 components, CF(1) - the catalytic core - and CF(0) - the membrane proton channel. CF(1) has five subunits: alpha(3), beta(3), gamma(1), delta(1), epsilon(1). CF(0) has three main subunits: a(1), b(2) and c(9-12). The alpha and beta chains form an alternating ring which encloses part of the gamma chain. CF(1) is attached to CF(0) by a central stalk formed by the gamma and epsilon chains, while a peripheral stalk is formed by the delta and b chains.

Its subcellular location is the cell membrane. It carries out the reaction ATP + H2O + 4 H(+)(in) = ADP + phosphate + 5 H(+)(out). In terms of biological role, produces ATP from ADP in the presence of a proton gradient across the membrane. The catalytic sites are hosted primarily by the beta subunits. The chain is ATP synthase subunit beta from Clostridium botulinum (strain Loch Maree / Type A3).